The primary structure comprises 85 residues: Probable weak neurotoxin 3FTx-Lio1 (85 aa).

The first 18 residues, 1 to 18, serve as a signal peptide directing secretion; sequence MKAVILSLVAAFLYSGYT. Disulfide bonds link Cys21/Cys42, Cys24/Cys29, Cys35/Cys60, Cys64/Cys75, and Cys76/Cys81.

It belongs to the three-finger toxin family. Ancestral subfamily. In terms of tissue distribution, expressed by the venom gland.

It is found in the secreted. This Erythrolamprus poecilogyrus (Water snake) protein is Probable weak neurotoxin 3FTx-Lio1.